A 136-amino-acid chain; its full sequence is Translation initiation factor 5A (136 aa).

A Hypusine modification is found at Lys37.

This sequence belongs to the eIF-5A family.

It localises to the cytoplasm. Its function is as follows. Functions by promoting the formation of the first peptide bond. This is Translation initiation factor 5A (eIF5A) from Thermococcus onnurineus (strain NA1).